A 37-amino-acid chain; its full sequence is Large ribosomal subunit protein bL36c (37 aa).

It belongs to the bacterial ribosomal protein bL36 family.

The protein localises to the plastid. Its subcellular location is the chloroplast. In Coffea arabica (Arabian coffee), this protein is Large ribosomal subunit protein bL36c.